We begin with the raw amino-acid sequence, 137 residues long: Peptide methionine sulfoxide reductase MsrB (137 aa).

The 123-residue stretch at 7–129 (PTENIEKLSD…NSASLNFVDD (123 aa)) folds into the MsrB domain. Residues Cys-46, Cys-49, Cys-95, and Cys-98 each coordinate Zn(2+). The Nucleophile role is filled by Cys-118.

It belongs to the MsrB Met sulfoxide reductase family. Requires Zn(2+) as cofactor.

It carries out the reaction L-methionyl-[protein] + [thioredoxin]-disulfide + H2O = L-methionyl-(R)-S-oxide-[protein] + [thioredoxin]-dithiol. This is Peptide methionine sulfoxide reductase MsrB from Yersinia pseudotuberculosis serotype O:1b (strain IP 31758).